Reading from the N-terminus, the 90-residue chain is Chromosomal protein MC1c (90 aa).

In terms of biological role, protects DNA against thermal denaturation and modulates transcription. This Methanothrix soehngenii (Methanosaeta concilii) protein is Chromosomal protein MC1c.